A 317-amino-acid chain; its full sequence is Flagellar hook-associated protein 3 (317 aa).

This sequence belongs to the bacterial flagellin family.

The protein resides in the secreted. Its subcellular location is the bacterial flagellum. The polypeptide is Flagellar hook-associated protein 3 (flgL) (Escherichia coli (strain K12)).